Here is a 619-residue protein sequence, read N- to C-terminus: Long-chain fatty acid transport protein 6 (619 aa).

2 helical membrane passes run 22-42 and 119-139; these read LLFPYFWDDFWYLLKVVRYGI and VHVWFGLAKLGCVVAFLNSNL. Residue 221–232 participates in AMP binding; that stretch reads YIFTSGTTGLPK.

Belongs to the ATP-dependent AMP-binding enzyme family.

Its subcellular location is the cell membrane. It localises to the sarcolemma. The catalysed reaction is a fatty acid(in) = a fatty acid(out). It catalyses the reaction hexadecanoate(out) = hexadecanoate(in). The enzyme catalyses (9Z,12Z)-octadecadienoate(out) = (9Z,12Z)-octadecadienoate(in). It carries out the reaction (9Z)-octadecenoate(out) = (9Z)-octadecenoate(in). The catalysed reaction is a very long-chain fatty acid + ATP + CoA = a very long-chain fatty acyl-CoA + AMP + diphosphate. It catalyses the reaction tetracosanoate + ATP + CoA = tetracosanoyl-CoA + AMP + diphosphate. The enzyme catalyses a long-chain fatty acid + ATP + CoA = a long-chain fatty acyl-CoA + AMP + diphosphate. It carries out the reaction (9Z)-octadecenoate + ATP + CoA = (9Z)-octadecenoyl-CoA + AMP + diphosphate. The catalysed reaction is (5Z,8Z,11Z,14Z)-eicosatetraenoate + ATP + CoA = (5Z,8Z,11Z,14Z)-eicosatetraenoyl-CoA + AMP + diphosphate. Mediates the import of long-chain fatty acids (LCFA) into the cell by facilitating their transport at the plasma membrane. Also functions as an acyl-CoA ligase catalyzing the ATP-dependent formation of fatty acyl-CoA using LCFA and very-long-chain fatty acids (VLCFA) as substrates. Plays a pivotal role in regulating available LCFA substrates from exogenous sources in tissues undergoing high levels of beta-oxidation such as the heart. The chain is Long-chain fatty acid transport protein 6 (Slc27a6) from Mus musculus (Mouse).